Reading from the N-terminus, the 213-residue chain is Thiamine-phosphate synthase (213 aa).

4-amino-2-methyl-5-(diphosphooxymethyl)pyrimidine contacts are provided by residues 38 to 42 and aspartate 70; that span reads QLREK. Residues aspartate 71 and glutamate 90 each coordinate Mg(2+). Residue serine 109 participates in 4-amino-2-methyl-5-(diphosphooxymethyl)pyrimidine binding. 2-[(2R,5Z)-2-carboxy-4-methylthiazol-5(2H)-ylidene]ethyl phosphate is bound at residue 135 to 137; sequence TQT. Residue lysine 138 participates in 4-amino-2-methyl-5-(diphosphooxymethyl)pyrimidine binding. Residues glycine 165 and 185–186 contribute to the 2-[(2R,5Z)-2-carboxy-4-methylthiazol-5(2H)-ylidene]ethyl phosphate site; that span reads VS.

This sequence belongs to the thiamine-phosphate synthase family. The cofactor is Mg(2+).

It carries out the reaction 2-[(2R,5Z)-2-carboxy-4-methylthiazol-5(2H)-ylidene]ethyl phosphate + 4-amino-2-methyl-5-(diphosphooxymethyl)pyrimidine + 2 H(+) = thiamine phosphate + CO2 + diphosphate. The enzyme catalyses 2-(2-carboxy-4-methylthiazol-5-yl)ethyl phosphate + 4-amino-2-methyl-5-(diphosphooxymethyl)pyrimidine + 2 H(+) = thiamine phosphate + CO2 + diphosphate. It catalyses the reaction 4-methyl-5-(2-phosphooxyethyl)-thiazole + 4-amino-2-methyl-5-(diphosphooxymethyl)pyrimidine + H(+) = thiamine phosphate + diphosphate. The protein operates within cofactor biosynthesis; thiamine diphosphate biosynthesis; thiamine phosphate from 4-amino-2-methyl-5-diphosphomethylpyrimidine and 4-methyl-5-(2-phosphoethyl)-thiazole: step 1/1. Its function is as follows. Condenses 4-methyl-5-(beta-hydroxyethyl)thiazole monophosphate (THZ-P) and 2-methyl-4-amino-5-hydroxymethyl pyrimidine pyrophosphate (HMP-PP) to form thiamine monophosphate (TMP). The chain is Thiamine-phosphate synthase from Lacticaseibacillus paracasei (strain ATCC 334 / BCRC 17002 / CCUG 31169 / CIP 107868 / KCTC 3260 / NRRL B-441) (Lactobacillus paracasei).